We begin with the raw amino-acid sequence, 239 residues long: IkB-like protein (239 aa).

4 ANK repeats span residues 48-77 (NKITVFMLICIYGRLDFLRFLFKQESYPGE), 87-116 (DGNSAWHYLAEKNNHLLLEEVLDYFGKNGI), 124-153 (NGVTPIMKAAMRGRTLSVLSLLKYGANPNR), and 158-187 (KGFTTWDWAVFTGHADLVKTLNKGYQKPLF). Positions 81–87 (HYRRDKD) match the Nuclear localization signal motif. The Nuclear localization signal signature appears at 203–214 (KKKPKIIITGCE). Positions 206-213 (PKIIITGC) match the PxIxITxC motif; Interaction with host PPP3CA motif. The short motif at 228–231 (FLCV) is the FLCV motif element.

It belongs to the asfivirus A238L family. Interacts with host PPIA. Interacts with host PPP3CA/Calcineurin. Interacts with host RELA/p65; interaction of the 32 kDa form with host RELA results in the formation of a stable complex with NF-kappa-B. Interacts with host PPP3R1. Interacts with host EP300; this interaction inhibits the association of host EP300 with host RELA, JUN and NFATC2. In terms of processing, the protein exists in a 28 kDa and a 32 kDa form, probably due to post-translational modifications which are neither phosphorylation, nor sumoylation.

The protein localises to the host nucleus. It localises to the host cytoplasm. Functionally, ikB-like protein that inhibits the binding of NF-kappa-B to DNA, thereby downregulating pro-inflammatory cytokine production. Forms a heterodimer with the NF-kappa-B subunit RELA/p65 and prevents the activation of the NF-kappa-B transcription factor. Inhibits calcineurin function, which is required for the induction of nuclear factor of activated T cells (NFAT)-dependent immune response genes. Prevents the binding of substrates to calcineurin without affecting the phosphatase activity. Does not contain the serine residues that are phosphorylated by host IkB kinase and thus is not degraded following stimulation of the NFkB pathway. The polypeptide is IkB-like protein (A238L) (Ornithodoros (relapsing fever ticks)).